Consider the following 472-residue polypeptide: uncharacterized protein (472 aa).

It to B.subtilis YcdC.

This is an uncharacterized protein from Bacillus subtilis (strain 168).